The following is a 238-amino-acid chain: D-aminoacyl-tRNA deacylase (238 aa).

Belongs to the DtdA deacylase family. As to quaternary structure, monomer. Requires Zn(2+) as cofactor.

The enzyme catalyses a D-aminoacyl-tRNA + H2O = a tRNA + a D-alpha-amino acid + H(+). It carries out the reaction glycyl-tRNA(Ala) + H2O = tRNA(Ala) + glycine + H(+). The catalysed reaction is D-tyrosyl-tRNA(Tyr) + H2O = D-tyrosine + tRNA(Tyr). Its function is as follows. D-aminoacyl-tRNA deacylase with broad substrate specificity. By recycling D-aminoacyl-tRNA to D-amino acids and free tRNA molecules, this enzyme counteracts the toxicity associated with the formation of D-aminoacyl-tRNA entities in vivo. Catalyzes the hydrolysis of D-tyrosyl-tRNA(Tyr). In Saccharolobus solfataricus (strain ATCC 35092 / DSM 1617 / JCM 11322 / P2) (Sulfolobus solfataricus), this protein is D-aminoacyl-tRNA deacylase.